A 331-amino-acid polypeptide reads, in one-letter code: Glyceraldehyde-3-phosphate dehydrogenase 2 (331 aa).

NAD(+)-binding positions include 11–12, D33, and R78; that span reads RI. D-glyceraldehyde 3-phosphate-binding positions include 148-150, T179, 208-209, and R231; these read SCT and TG. The Nucleophile role is filled by C149. Residue N313 coordinates NAD(+).

This sequence belongs to the glyceraldehyde-3-phosphate dehydrogenase family. As to quaternary structure, homotetramer.

The protein localises to the cytoplasm. It carries out the reaction D-glyceraldehyde 3-phosphate + phosphate + NAD(+) = (2R)-3-phospho-glyceroyl phosphate + NADH + H(+). It participates in carbohydrate degradation; glycolysis; pyruvate from D-glyceraldehyde 3-phosphate: step 1/5. The sequence is that of Glyceraldehyde-3-phosphate dehydrogenase 2 (GAP2) from Kluyveromyces marxianus (Yeast).